A 314-amino-acid polypeptide reads, in one-letter code: Vomeronasal type-1 receptor 98 (314 aa).

The Extracellular segment spans residues 1 to 19; the sequence is MNKDTTMYCSAYIRDVFFC. Residues 20 to 40 form a helical membrane-spanning segment; sequence EIGVGISANSCLLLFHIFMFI. Residues 41 to 49 lie on the Cytoplasmic side of the membrane; the sequence is RGHRPRLTD. A helical membrane pass occupies residues 50–70; it reads LPIGLMALIHLLMLLLAAYIA. The Extracellular portion of the chain corresponds to 71–92; it reads KDFFMSSGWDDITCKLFIFLHR. Cys84 and Cys171 are oxidised to a cystine. Residues 93–113 form a helical membrane-spanning segment; it reads FFRSLSVCATCMLSVFQTIIL. Topologically, residues 114 to 133 are cytoplasmic; sequence CPQSSHLAKFKPNSPYHLSC. A helical membrane pass occupies residues 134–154; that stretch reads FFIFMSIFYTSISSHILIAAI. The Extracellular portion of the chain corresponds to 155–186; the sequence is ATQNLTSVNLIYITKSCSFLPMSSSMQRTFST. Residue Asn158 is glycosylated (N-linked (GlcNAc...) asparagine). The chain crosses the membrane as a helical span at residues 187–207; it reads LLAFRNAFLIGLMGLSTCYMA. Residues 208–235 are Cytoplasmic-facing; that stretch reads TLLCRHKTRSQRLQNSKLSPKATPEQRA. Residues 236–256 traverse the membrane as a helical segment; that stretch reads IWTLLMFMSFFLVMSTFDSII. Over 257-268 the chain is Extracellular; that stretch reads SYSRTIFQGNPS. A helical transmembrane segment spans residues 269 to 289; sequence LYCAQILVAHSYAVVSPMLVL. Over 290–314 the chain is Cytoplasmic; that stretch reads SNENRLTNPLISMYERIVRLDFLCW.

This sequence belongs to the G-protein coupled receptor 1 family.

It is found in the cell membrane. Its function is as follows. Putative pheromone receptor implicated in the regulation of social as well as reproductive behavior. In Rattus norvegicus (Rat), this protein is Vomeronasal type-1 receptor 98 (Vom1r98).